A 776-amino-acid polypeptide reads, in one-letter code: Protein SEY1 (776 aa).

Topologically, residues 1 to 681 (MADRPAIQLI…KRSIITTRTH (681 aa)) are cytoplasmic. Positions 34-263 (GLDYHVISVF…TENYYFKPQY (230 aa)) constitute a GB1/RHD3-type G domain. A GTP-binding site is contributed by 44–51 (GSQSSGKS). A helical transmembrane segment spans residues 682–702 (IPPWIYVLLAVLGWNEFVAVI). The Lumenal portion of the chain corresponds to 703 to 705 (RNP). A helical transmembrane segment spans residues 706–726 (LFVTLTLILGATFFVIHKFGL). The Cytoplasmic segment spans residues 727–776 (WGPVVNVVQSAVGETRTAIKDKLRQFVVEDHEVKESFEMKDFSKNEQKEK).

It belongs to the TRAFAC class dynamin-like GTPase superfamily. GB1/RHD3 GTPase family. RHD3 subfamily. In terms of assembly, interacts with RTN1 and YOP1; GTP binding is not required for these interactions.

Its subcellular location is the endoplasmic reticulum membrane. Its function is as follows. Cooperates with the reticulon proteins RTN1 and RTN2 and the tubule-shaping DP1 family protein YOP1 to generate and maintain the structure of the tubular endoplasmic reticulum network. Has GTPase activity, which is required for its function in ER organization. The chain is Protein SEY1 from Saccharomyces cerevisiae (strain ATCC 204508 / S288c) (Baker's yeast).